Reading from the N-terminus, the 151-residue chain is 3-hydroxyacyl-[acyl-carrier-protein] dehydratase FabZ (151 aa).

The active site involves His57.

This sequence belongs to the thioester dehydratase family. FabZ subfamily.

Its subcellular location is the cytoplasm. It carries out the reaction a (3R)-hydroxyacyl-[ACP] = a (2E)-enoyl-[ACP] + H2O. Functionally, involved in unsaturated fatty acids biosynthesis. Catalyzes the dehydration of short chain beta-hydroxyacyl-ACPs and long chain saturated and unsaturated beta-hydroxyacyl-ACPs. This Synechococcus sp. (strain CC9605) protein is 3-hydroxyacyl-[acyl-carrier-protein] dehydratase FabZ.